Here is a 380-residue protein sequence, read N- to C-terminus: Geranylgeranyl pyrophosphate synthase cle6 (380 aa).

A compositionally biased stretch (low complexity) spans 1 to 19 (MHSVRTSTTSTSSMVSSTM). The segment at 1–55 (MHSVRTSTTSTSSMVSSTMHPFDAFNAPQPYQQHHPPRWNIHNPHFSQTNGHSIQ) is disordered. Residues 45–55 (HFSQTNGHSIQ) are compositionally biased toward polar residues. Residues lysine 102, arginine 105, and histidine 134 each coordinate isopentenyl diphosphate. Mg(2+) contacts are provided by aspartate 141 and aspartate 145. Residue arginine 150 coordinates dimethylallyl diphosphate. Arginine 151 contacts isopentenyl diphosphate. 3 residues coordinate dimethylallyl diphosphate: lysine 229, threonine 230, and glutamine 263. Aspartate 266 lines the Mg(2+) pocket. Dimethylallyl diphosphate contacts are provided by asparagine 270, lysine 280, and lysine 290.

This sequence belongs to the FPP/GGPP synthase family. It depends on Mg(2+) as a cofactor.

It carries out the reaction isopentenyl diphosphate + dimethylallyl diphosphate = (2E)-geranyl diphosphate + diphosphate. The enzyme catalyses isopentenyl diphosphate + (2E)-geranyl diphosphate = (2E,6E)-farnesyl diphosphate + diphosphate. The catalysed reaction is isopentenyl diphosphate + (2E,6E)-farnesyl diphosphate = (2E,6E,10E)-geranylgeranyl diphosphate + diphosphate. It functions in the pathway secondary metabolite biosynthesis; terpenoid biosynthesis. Functionally, geranylgeranyl pyrophosphate synthase; part of the cluster A that mediates the biosynthesis of chevalone E and its oxidized derivatives that possess a unique five-membered lactone ring and can synergistically enhance the cytotoxicity of doxorubicin (DOX) in breast cancer cells. Within the pathway, cle6 takes part to the biosynthesis of the molecular scaffold by providing geranylgeranyl pyrophosphate (GGPP) to the prenyltransferase cle5 for C-3 geranylgeranylation of triacetic acid lactone. The molecular scaffold is commonly biosynthesized by a series of enzymes including the non-reducing polyketide synthase (NR-PKS) cle1 that produces the alpha-pyrone triacetic acid lactone (TAL); The membrane-bound prenyltransferase cle5 that accepts TAL as its substrate to perform a C-3 geranylgeranylation reaction, in which the pathway-dedicated GGPS cle6 is required to provide GGPP, the other substrate of cle5; the FAD-dependent monooxygenase Cle3 that forms an (S)-epoxide ring at the terminal olefin of the geranylgeranyl group; and the terpene cyclase Cle7 that catalyzes the cyclization of the prenyl group that yields the pentacyclic pathway intermediate chevalone E. Chevalone E can derivatize into seven new oxidized analogs by the cytochrome P450 monooxygenases cle2 (acting at C-20) and cle4 (acting at C-11 and C-12). In Aspergillus versicolor, this protein is Geranylgeranyl pyrophosphate synthase cle6.